Reading from the N-terminus, the 124-residue chain is Quinol oxidase subunit 4 (124 aa).

3 helical membrane passes run 16–36 (IVGF…AVYT), 44–64 (LWII…MFMH), and 78–98 (TLFG…IFAA).

This sequence belongs to the cytochrome c oxidase bacterial subunit 4 family.

Its subcellular location is the cell membrane. It catalyses the reaction 2 a quinol + O2 = 2 a quinone + 2 H2O. Catalyzes quinol oxidation with the concomitant reduction of oxygen to water. Major component for energy conversion during vegetative growth. The sequence is that of Quinol oxidase subunit 4 (qoxD) from Bacillus subtilis (strain 168).